Here is an 813-residue protein sequence, read N- to C-terminus: MTSFQEVPLQTSNFAHVIFQNVAKSYLPNAHLECHYTLTPYIHPHSKDWVGIFKVGWSTARDYYTFLWSPMPEQYVEGSTVNCVLAFQGYYLPNDDGEFYQFCYVTHKGEIRGASTPFQFRAASPVEELLTMEDEGNSDMLVVTTKAGLLELKIEKTLKEKEELLKLVSVLEKETAQLREQVGRMERELSHEKSRCEQLQAEQKGLLEVSQSLRVENEEFMKRYSDATSKAHQLEEDIVSVTHKAVEKETELDSLKDKLRKAQQEKEQLECQLKTEKDEKELYKVHLKNTEIENTKLVSEIQTLKNVDGNKESMITHFKEEIGKLQSCLADKENLHRALLLTTSNKEDTLLLKEQLRKAEEQVQATRQELIFLAKELSDAVNVRDKTMADLHTARLENERVKKQLADTLAELQLHAVKTDQEKTDTLEHELRREVEDLKLRLQMAADHYKEKFKECQRLQKQINKLSDQSASSNGVFTKRMGSQQKVNDASINTDPAASASAVDVKPAASCAAETDFDMSAKDHVCEVTKEMAEKVEKYNKCKQLLQDEKAKCNKYADELAQMELKWKEQVRIAENVKLELAELEDSYSLQLAEKDKEINCLASFLENLSREKELTKSLEDQKGRKMEGQSPQQVSRCLNTCSEQSGLLPTLPAAQPVLQYGNPYTAHETRDGADGAFYPDEIQRPPVRGPSWEDNVVCSQPARNLSRPDGLEDPEDSREDENVPIPPDPANQHLRGHGAGFCFDSSFDVHKKCPLCELMFPPNYDQIKFEEHVESHWKVCPMCSEQFPPDYDQQGFERHVQTHFDQNVLNFD.

3 positions are modified to phosphoserine: S124, S138, and S225. Positions 144 to 596 (TTKAGLLELK…SYSLQLAEKD (453 aa)) form a coiled coil. The segment at 320 to 420 (EEIGKLQSCL…ELQLHAVKTD (101 aa)) is oligomerization. The residue at position 618 (S618) is a Phosphoserine; by IKKA. Position 631 is a phosphoserine (S631). The interval 667 to 732 (AHETRDGADG…NVPIPPDPAN (66 aa)) is disordered. Position 692 is a phosphoserine; by IKKA (S692). 2 UBZ1-type zinc fingers span residues 751-777 (HKKCPLCELMFPPNYDQIKFEEHVESH) and 778-804 (WKVCPMCSEQFPPDYDQQGFERHVQTH). The Zn(2+) site is built by C754, C757, H773, H777, C781, C784, H800, and H804.

Homooligomer. Interacts with TNFAIP3. Interacts with STARD13. Interacts with MYO6. Interacts with TOM1; the interaction is indirect and is mediated by MYO6, which acts as a bridge between TOM1 and TAX1BP1. Interacts with MAVS; this interaction induces MAVS polyubiquitination. Interacts with TNIP1. Interacts with TRAF6; this interaction mediates deubiquitination of TRAF6 and inhibition of NF-kappa-B activation. Interacts with RIPK1; this interaction negatively regulates RIPK1 ubiquitination. Interacts with NBR1. Interacts with TBK1. Interacts with RB1CC1. Interacts with SQSTM1. Interacts with AZI2. Interacts with TICAM1 and TRIM32; these interactions target TICAM1 to TAX1BP1-mediated selective autophagic degradation. Post-translationally, phosphorylated in the C-terminal region by CHUK/IKKA leading to NF-kappa-B signaling down-regulation.

It is found in the cytoplasm. The protein localises to the mitochondrion. Its subcellular location is the preautophagosomal structure. The protein resides in the cytoplasmic vesicle. It localises to the autophagosome. Ubiquitin-binding adapter that participates in inflammatory, antiviral and innate immune processes as well as selective autophagy regulation. Plays a key role in the negative regulation of NF-kappa-B and IRF3 signalings by acting as an adapter for the ubiquitin-editing enzyme A20/TNFAIP3 to bind and inactivate its substrates. Disrupts the interactions between the E3 ubiquitin ligase TRAF3 and TBK1/IKBKE to attenuate 'Lys63'-linked polyubiquitination of TBK1 and thereby IFN-beta production. Also recruits A20/TNFAIP3 to ubiquitinated signaling proteins TRAF6 and RIPK1, leading to their deubiquitination and disruption of IL-1 and TNF-induced NF-kappa-B signaling pathways. Inhibits virus-induced apoptosis by inducing the 'Lys-48'-linked polyubiquitination and degradation of MAVS via recruitment of the E3 ligase ITCH, thereby attenuating MAVS-mediated apoptosis signaling. As a macroautophagy/autophagy receptor, facilitates the xenophagic clearance of pathogenic bacteria such as Salmonella typhimurium and Mycobacterium tuberculosis. Upon NBR1 recruitment to the SQSTM1-ubiquitin condensates, acts as the major recruiter of RB1CC1 to these ubiquitin condensates to promote their autophagic degradation. Mediates the autophagic degradation of other substrates including TICAM1. This chain is Tax1-binding protein 1 homolog (Tax1bp1), found in Rattus norvegicus (Rat).